The chain runs to 147 residues: MMWWAVWCAAMVAGSVFTAAAPPTDSIDLMQMDPSLADDESLGFAMQSLSGRYAAAPWLYLLADVSHDPQRMAEFSQSSGRARPKRKMPSLSINNPMEVLRQRLLLEVARKQMREANQRQAVANRLFLQNVGKRGAWGEPASYLYNN.

Residues Met-1 to Ser-26 form the signal peptide. The propeptide occupies Ile-27–Pro-84. Val-131 carries the post-translational modification Valine amide. Residues Gly-135–Asn-147 constitute a propeptide that is removed on maturation.

The protein belongs to the sauvagine/corticotropin-releasing factor/urotensin I family.

Its subcellular location is the secreted. In terms of biological role, regulation of fluid secretion. The sequence is that of Diuretic hormone 45 (dh45) from Bombyx mori (Silk moth).